Reading from the N-terminus, the 469-residue chain is Adenosylhomocysteinase (469 aa).

Residues threonine 63, aspartate 139, and glutamate 164 each contribute to the substrate site. Residue 165 to 167 coordinates NAD(+); it reads TTT. Residues lysine 194 and aspartate 198 each coordinate substrate. Residues asparagine 199, 228-233, glutamate 251, asparagine 300, 321-323, and asparagine 375 each bind NAD(+); these read GYGDVG and IGH.

This sequence belongs to the adenosylhomocysteinase family. The cofactor is NAD(+).

The protein localises to the cytoplasm. It catalyses the reaction S-adenosyl-L-homocysteine + H2O = L-homocysteine + adenosine. It participates in amino-acid biosynthesis; L-homocysteine biosynthesis; L-homocysteine from S-adenosyl-L-homocysteine: step 1/1. In terms of biological role, may play a key role in the regulation of the intracellular concentration of adenosylhomocysteine. The sequence is that of Adenosylhomocysteinase from Pseudomonas putida (strain ATCC 700007 / DSM 6899 / JCM 31910 / BCRC 17059 / LMG 24140 / F1).